A 216-amino-acid chain; its full sequence is tRNA (guanine-N(7)-)-methyltransferase (216 aa).

S-adenosyl-L-methionine is bound by residues glutamate 44, glutamate 69, asparagine 97, and aspartate 119. The active site involves aspartate 119. Substrate is bound by residues lysine 123, aspartate 155, and 192 to 195 (TEYE).

This sequence belongs to the class I-like SAM-binding methyltransferase superfamily. TrmB family.

It carries out the reaction guanosine(46) in tRNA + S-adenosyl-L-methionine = N(7)-methylguanosine(46) in tRNA + S-adenosyl-L-homocysteine. The protein operates within tRNA modification; N(7)-methylguanine-tRNA biosynthesis. Catalyzes the formation of N(7)-methylguanine at position 46 (m7G46) in tRNA. The polypeptide is tRNA (guanine-N(7)-)-methyltransferase (Lysinibacillus sphaericus (strain C3-41)).